Here is a 511-residue protein sequence, read N- to C-terminus: Lysine--tRNA ligase (511 aa).

Glu421 and Glu428 together coordinate Mg(2+).

Belongs to the class-II aminoacyl-tRNA synthetase family. As to quaternary structure, homodimer. Requires Mg(2+) as cofactor.

The protein localises to the cytoplasm. It catalyses the reaction tRNA(Lys) + L-lysine + ATP = L-lysyl-tRNA(Lys) + AMP + diphosphate. The chain is Lysine--tRNA ligase from Janthinobacterium sp. (strain Marseille) (Minibacterium massiliensis).